A 469-amino-acid polypeptide reads, in one-letter code: 3-isopropylmalate dehydratase large subunit (469 aa).

The [4Fe-4S] cluster site is built by cysteine 347, cysteine 410, and cysteine 413.

The protein belongs to the aconitase/IPM isomerase family. LeuC type 1 subfamily. In terms of assembly, heterodimer of LeuC and LeuD. The cofactor is [4Fe-4S] cluster.

The catalysed reaction is (2R,3S)-3-isopropylmalate = (2S)-2-isopropylmalate. It participates in amino-acid biosynthesis; L-leucine biosynthesis; L-leucine from 3-methyl-2-oxobutanoate: step 2/4. Catalyzes the isomerization between 2-isopropylmalate and 3-isopropylmalate, via the formation of 2-isopropylmaleate. In Burkholderia ambifaria (strain MC40-6), this protein is 3-isopropylmalate dehydratase large subunit.